A 359-amino-acid polypeptide reads, in one-letter code: Peptide chain release factor 1 (359 aa).

Residue Gln-235 is modified to N5-methylglutamine.

Belongs to the prokaryotic/mitochondrial release factor family. Post-translationally, methylated by PrmC. Methylation increases the termination efficiency of RF1.

The protein localises to the cytoplasm. Functionally, peptide chain release factor 1 directs the termination of translation in response to the peptide chain termination codons UAG and UAA. The protein is Peptide chain release factor 1 of Polynucleobacter necessarius subsp. necessarius (strain STIR1).